A 346-amino-acid polypeptide reads, in one-letter code: NADH-ubiquinone oxidoreductase chain 2 (346 aa).

10 helical membrane-spanning segments follow: residues 3-23, 25-45, 67-87, 96-116, 122-142, 145-165, 200-220, 238-258, 273-293, and 324-344; these read PIIFTTILLTIMLGTNNVMIS, HWLLVWIGFEMNMLAIIPIMM, SMLLMMAVIINLMFSGQWTVM, MLMTMALAMKLGMAPFHFWVP, IPLSSGLILLTWQKLAPMSVL, IFPSINLNLILTLSILSILIG, TLLNLIIYITMTSTMFTMFMA, IMTILILATLLSMGGLPPLSG, NSIILPTFMAITALLNLYFYM, and FLPTMVVLSTMTLPLTPMLSV.

This sequence belongs to the complex I subunit 2 family. In terms of assembly, core subunit of respiratory chain NADH dehydrogenase (Complex I) which is composed of 45 different subunits. Interacts with TMEM242.

The protein resides in the mitochondrion inner membrane. It carries out the reaction a ubiquinone + NADH + 5 H(+)(in) = a ubiquinol + NAD(+) + 4 H(+)(out). Functionally, core subunit of the mitochondrial membrane respiratory chain NADH dehydrogenase (Complex I) which catalyzes electron transfer from NADH through the respiratory chain, using ubiquinone as an electron acceptor. Essential for the catalytic activity and assembly of complex I. The protein is NADH-ubiquinone oxidoreductase chain 2 of Bos mutus grunniens (Wild yak).